The chain runs to 429 residues: ATP-dependent RNA helicase RhlB (429 aa).

The Q motif motif lies at 9 to 37; sequence EKFAQMGLEPEVLAGLESKGFHYCTPIQA. One can recognise a Helicase ATP-binding domain in the interval 40 to 219; the sequence is LPLLVEGHDL…YEHMNHPEHV (180 aa). 53–60 is a binding site for ATP; that stretch reads AQTGTGKT. The short motif at 165 to 168 is the DEAD box element; that stretch reads DEAD. Residues 243 to 390 enclose the Helicase C-terminal domain; the sequence is KMLLLLSLME…VSKYDREALL (148 aa). The tract at residues 395 to 429 is disordered; it reads APKRVVRNRQPVNRNMRDRQGGGNSNNRRRPPRKS.

This sequence belongs to the DEAD box helicase family. RhlB subfamily. As to quaternary structure, component of the RNA degradosome, which is a multiprotein complex involved in RNA processing and mRNA degradation.

It localises to the cytoplasm. It carries out the reaction ATP + H2O = ADP + phosphate + H(+). Functionally, DEAD-box RNA helicase involved in RNA degradation. Has RNA-dependent ATPase activity and unwinds double-stranded RNA. This is ATP-dependent RNA helicase RhlB from Aeromonas salmonicida (strain A449).